The chain runs to 566 residues: Transcription factor tasR (566 aa).

Low complexity predominate over residues 1–30; that stretch reads MISASRMEESASSSSLSDAAAPPPGAALQS. Residues 1–31 form a disordered region; the sequence is MISASRMEESASSSSLSDAAAPPPGAALQSI. The zn(2)-C6 fungal-type DNA-binding region spans 35–68; it reads CDRCRFHKLKCNVPAAGHGGPVPCERCTRAKVPC. Disordered stretches follow at residues 72-174, 346-382, 422-453, and 500-551; these read RRRR…PGQH, EFIV…GGDD, SESD…TGTA, and RGVG…GLGG. Low complexity-rich tracts occupy residues 89-108 and 359-378; these read PTRR…TSAA and SESS…NNEA. Over residues 501–532 the composition is skewed to gly residues; it reads GVGGGGGGGGGGGGGGGGGVGGGGGGGGGPGG.

Its subcellular location is the nucleus. In terms of biological role, transcription factor that regulates the expression of the gene cluster that mediates the biosynthesis of the tetramic acids Sch210971 and Sch210972, potential anti-HIV fungal natural product that contain a decalin core. The polypeptide is Transcription factor tasR (Hapsidospora irregularis).